The primary structure comprises 247 residues: MNVLLCSINTLNRFYDISALEVGQHFYWQIGDFQVHAQVLITSWVVIAILLISTILVVRNPQTIPTSGQNFFEYVLEFIRDVSKTQIGEEYGPWVPFIGTLFLFIFVSNWSGALLPWKIIKLPHGELAAPTNDINTTVALALLTSVAYFYAGISKKGLAYFGKYIQPTPILLPINILEDFTKPLSLSFRLFGNILADELVVVVLVSLVPLVIPIPVMFLGLFTSGIQALIFATLAAAYIGESMEGHH.

The next 5 membrane-spanning stretches (helical) occupy residues 38-58, 95-115, 134-154, 199-219, and 220-240; these read QVLI…ILVV, VPFI…GALL, INTT…AGIS, LVVV…VMFL, and GLFT…AYIG.

This sequence belongs to the ATPase A chain family. F-type ATPases have 2 components, CF(1) - the catalytic core - and CF(0) - the membrane proton channel. CF(1) has five subunits: alpha(3), beta(3), gamma(1), delta(1), epsilon(1). CF(0) has four main subunits: a, b, b' and c.

It localises to the plastid. Its subcellular location is the chloroplast thylakoid membrane. Functionally, key component of the proton channel; it plays a direct role in the translocation of protons across the membrane. The sequence is that of ATP synthase subunit a, chloroplastic from Cicer arietinum (Chickpea).